The following is an 88-amino-acid chain: MAHKKGQGSTQNNRDSAGRRLGVKKFGSEFVRAGNIIVRQRGTKMHPGNNVGMGKDHTLYALTDGVVKFEYKDKSRKKVSVISQNFGE.

The tract at residues 1-21 (MAHKKGQGSTQNNRDSAGRRL) is disordered.

The protein belongs to the bacterial ribosomal protein bL27 family.

The chain is Large ribosomal subunit protein bL27 from Helicobacter acinonychis (strain Sheeba).